We begin with the raw amino-acid sequence, 220 residues long: GTP-binding protein YPT53 (220 aa).

GTP-binding positions include 19–26 (GESAVGKS), 67–71 (DTAGQ), and 125–128 (NKMD). S-geranylgeranyl cysteine attachment occurs at residues cysteine 218 and cysteine 220. At cysteine 220 the chain carries Cysteine methyl ester.

Belongs to the small GTPase superfamily. Rab family.

It localises to the cell membrane. Required for transport in the endocytic pathway and for correct sorting of the vacuolar hydrolases suggesting a possible intersection of the endocytic with the vacuolar sorting pathway. May be involved in recruiting the MON1-CCZ1 complex to membranes enriched in phosphatidylinositol 3-phosphate (PtdIns[3]P) or other charged lipids, leading to recruitment of YPT7. This is GTP-binding protein YPT53 (YPT53) from Saccharomyces cerevisiae (strain ATCC 204508 / S288c) (Baker's yeast).